Here is a 436-residue protein sequence, read N- to C-terminus: 3-ketoacyl-CoA thiolase (436 aa).

Residue Cys-99 is the Acyl-thioester intermediate of the active site. Catalysis depends on proton acceptor residues His-392 and Cys-422.

The protein belongs to the thiolase-like superfamily. Thiolase family. As to quaternary structure, heterotetramer of two alpha chains (FadJ) and two beta chains (FadI).

It localises to the cytoplasm. It catalyses the reaction an acyl-CoA + acetyl-CoA = a 3-oxoacyl-CoA + CoA. It functions in the pathway lipid metabolism; fatty acid beta-oxidation. In terms of biological role, catalyzes the final step of fatty acid oxidation in which acetyl-CoA is released and the CoA ester of a fatty acid two carbons shorter is formed. This Shigella boydii serotype 4 (strain Sb227) protein is 3-ketoacyl-CoA thiolase.